The chain runs to 158 residues: Putative pre-16S rRNA nuclease (158 aa).

It belongs to the YqgF nuclease family.

It localises to the cytoplasm. In terms of biological role, could be a nuclease involved in processing of the 5'-end of pre-16S rRNA. The sequence is that of Putative pre-16S rRNA nuclease from Acidiphilium cryptum (strain JF-5).